The chain runs to 517 residues: Recombining binding protein suppressor of hairless-like protein (517 aa).

Basic and acidic residues predominate over residues 26-37 (EMQLQSEADRRS). A disordered region spans residues 26–48 (EMQLQSEADRRSLPGTWTRSSPE). 3 DNA-binding regions span residues 78–88 (QKSYGNEKRFF), 193–198 (SKPSQK), and 220–225 (RLRSQT). Residues 387 to 512 (LISTLELSGG…HQEFTRTNFH (126 aa)) enclose the IPT/TIG domain.

This sequence belongs to the Su(H) family. In terms of assembly, interacts weakly with EBNA2. Does not interact with any Notch proteins.

The protein localises to the nucleus. Putative transcription factor, which cooperates with EBNA2 to activate transcription. This chain is Recombining binding protein suppressor of hairless-like protein (RBPJL), found in Homo sapiens (Human).